The chain runs to 685 residues: MKFIALISGGKDSFYNIFHCLKNNHELIALGNIYPKESEEQELDSFMFQTVGHDLIDYYSKCIGVPLFRRSILRNTSNNVELNYTATQDDEIEELFELLRTVKDKIPDLEAVSVGAILSSYQRTRVENVCSRLGLVVLSYLWQRDQAELMGEMCLMSKDVNNVENDTNSGNKFDARIIKVAAIGLNEKHLGMSLPMMQPVLQKLNQLYQVHICGEGGEFETMVLDAPFFQHGYLELIDIVKCSDGEVHNARLKVKFQPRNLSKSFLLNQLDQLPVPSIFGNNWQDLTQNLPKQQAKTGEQRFENHMSNALPQTTINKTNDKLYISNLQSRKSETVEKQSEDIFTELADILHSNQIPRNHILSASLLIRDMSNFGKINKIYNEFLDLSKYGPLPPSRACVGSKCLPEDCHVQLSVVVDVKNTGKEKINKNKGGLHVQGRSYWAPCNIGPYSQSTWLNDDANQVSFISGQIGLVPQSMEILGTPLTDQIVLALQHFDTLCETIGAQEKLLMTCYISDESVLDSVIKTWAFYCSNMNHRSDLWMDKSDDVEKCLVLVKISELPRGAVAEFGGVTCKRLIVDDNDSDKKEREENDDVSTVFQKLNLNIEGFHNTTVSAFGYNRNFITGFVDSREELELILEKTPKSAQITLYYNPKEIITFHHHIGYYPVEKLFDYRGKEHRFGLHIRS.

The protein in the C-terminal section; belongs to the RutC family. In the N-terminal section; belongs to the Diphthine--ammonia ligase family. In terms of assembly, interacts with elongation factor 2 (eEF-2; EFT1 or EFT2).

It localises to the cytoplasm. The catalysed reaction is diphthine-[translation elongation factor 2] + NH4(+) + ATP = diphthamide-[translation elongation factor 2] + AMP + diphosphate + H(+). It participates in protein modification; peptidyl-diphthamide biosynthesis. Functionally, amidase that catalyzes the last step of diphthamide biosynthesis using ammonium and ATP. Diphthamide biosynthesis consists in the conversion of an L-histidine residue in the translation elongation factor eEF-2 (EFT1 or EFT2) to diphthamide. The polypeptide is Diphthine--ammonia ligase (DPH6) (Saccharomyces cerevisiae (strain ATCC 204508 / S288c) (Baker's yeast)).